Reading from the N-terminus, the 626-residue chain is Threonine--tRNA ligase (626 aa).

The tract at residues 1–145 (MRMLLIHSDY…SRTIVPEKAV (145 aa)) is editing domain. The interval 207–506 (PHVRLMLEQE…QEKGIKPMYP (300 aa)) is catalytic. Cys299, His351, and His475 together coordinate Zn(2+).

The protein belongs to the class-II aminoacyl-tRNA synthetase family. Homodimer. The cofactor is Zn(2+).

The protein localises to the cytoplasm. It carries out the reaction tRNA(Thr) + L-threonine + ATP = L-threonyl-tRNA(Thr) + AMP + diphosphate + H(+). Its function is as follows. Catalyzes the attachment of threonine to tRNA(Thr) in a two-step reaction: L-threonine is first activated by ATP to form Thr-AMP and then transferred to the acceptor end of tRNA(Thr). Also edits incorrectly charged L-seryl-tRNA(Thr). The polypeptide is Threonine--tRNA ligase (Thermococcus kodakarensis (strain ATCC BAA-918 / JCM 12380 / KOD1) (Pyrococcus kodakaraensis (strain KOD1))).